The chain runs to 119 residues: Small ribosomal subunit protein uS13 (119 aa).

Over residues 92-110 the composition is skewed to basic residues; it reads RKDTCKRSTKKNARTRKGP. Residues 92–119 form a disordered region; that stretch reads RKDTCKRSTKKNARTRKGPKKDNRWKER.

The protein belongs to the universal ribosomal protein uS13 family. Part of the 30S ribosomal subunit. Forms a loose heterodimer with protein S19. Forms two bridges to the 50S subunit in the 70S ribosome.

In terms of biological role, located at the top of the head of the 30S subunit, it contacts several helices of the 16S rRNA. In the 70S ribosome it contacts the 23S rRNA (bridge B1a) and protein L5 of the 50S subunit (bridge B1b), connecting the 2 subunits; these bridges are implicated in subunit movement. Contacts the tRNAs in the A and P-sites. In Mycoplasma sp, this protein is Small ribosomal subunit protein uS13.